We begin with the raw amino-acid sequence, 326 residues long: AA10 family lytic polysaccharide monooxygenase C (326 aa).

The N-terminal stretch at M1–A32 is a signal peptide. Cu(2+) contacts are provided by H33 and H118. The 168-residue stretch at H33–L200 folds into the Chitin-binding type-4 domain. A disulfide bridge connects residues C81 and C197. N-linked (GlcNAc...) asparagine glycosylation is found at N206, N215, N266, and N303. A disordered region spans residues N206–G326. A compositionally biased stretch (low complexity) spans S207–T281.

Belongs to the polysaccharide monooxygenase AA10 family. Cu(2+) serves as cofactor.

Its subcellular location is the secreted. Functionally, lytic polysaccharide monooxygenase (LPMO) that oxidatively cleaves alpha- and beta-chitin with C1 regioselectivity. Catalysis by LPMOs requires the reduction of the active-site copper from Cu(II) to Cu(I) by a reducing agent and H(2)O(2) or O(2) as a cosubstrate. Exhibits enzymatic activity on U.maydis fungal cell wall chitin and Boosts chitin hydrolysis by chitinase GH18A. The chain is AA10 family lytic polysaccharide monooxygenase C from Mycosarcoma maydis (Corn smut fungus).